The sequence spans 404 residues: Serine/threonine transporter SstT (404 aa).

9 helical membrane passes run 17 to 37 (IGIGVVIGLLLGILLPDVTAI), 44 to 64 (FVGALKAIAPLLVFALVVQAI), 75 to 95 (ITLIIVLYLLGTFLAALVAVI), 138 to 158 (ALATANYIGVLAWALIFGLAL), 179 to 199 (IVVWIINVAPIGIMGLVFSTV), 212 to 232 (LLILVLVGTMLFVALVVNPLL), 287 to 307 (IPLGAMINMGGAAITINVLTL), 319 to 339 (FLTALLLSVVAAISACGASGV), and 354 to 374 (FGISSDLAMQVVGVGFIVGVI).

It belongs to the dicarboxylate/amino acid:cation symporter (DAACS) (TC 2.A.23) family.

The protein localises to the cell membrane. It carries out the reaction L-serine(in) + Na(+)(in) = L-serine(out) + Na(+)(out). It catalyses the reaction L-threonine(in) + Na(+)(in) = L-threonine(out) + Na(+)(out). In terms of biological role, involved in the import of serine and threonine into the cell, with the concomitant import of sodium (symport system). This Streptococcus equi subsp. zooepidemicus (strain MGCS10565) protein is Serine/threonine transporter SstT.